Reading from the N-terminus, the 207-residue chain is Ribosomal RNA small subunit methyltransferase G (207 aa).

S-adenosyl-L-methionine contacts are provided by residues Gly-73, Leu-78, 124–125 (VE), and Arg-139.

The protein belongs to the methyltransferase superfamily. RNA methyltransferase RsmG family.

It is found in the cytoplasm. It catalyses the reaction guanosine(527) in 16S rRNA + S-adenosyl-L-methionine = N(7)-methylguanosine(527) in 16S rRNA + S-adenosyl-L-homocysteine. In terms of biological role, specifically methylates the N7 position of guanine in position 527 of 16S rRNA. The sequence is that of Ribosomal RNA small subunit methyltransferase G from Enterobacter sp. (strain 638).